Here is a 163-residue protein sequence, read N- to C-terminus: Globin CTT-Z (163 aa).

An N-terminal signal peptide occupies residues 1–16 (MKFFAVLALCIVGAIA). Residues 18 to 162 (PLTSDEAALV…VYTAVFQIVT (145 aa)) form the Globin domain. Heme b-binding residues include histidine 76 and histidine 111.

This sequence belongs to the globin family.

This chain is Globin CTT-Z (CTT-Z), found in Chironomus thummi piger (Midge).